The chain runs to 388 residues: Oligogalacturonate lyase (388 aa).

The protein resides in the periplasm. The enzyme catalyses 4-(4-deoxy-alpha-D-galact-4-enuronosyl)-D-galacturonate = 2 5-dehydro-4-deoxy-D-glucuronate. Its pathway is glycan metabolism; pectin degradation; 2-dehydro-3-deoxy-D-gluconate from pectin: step 3/5. Its function is as follows. Involved in degradation of pectin, which causes soft-rod disease in plants. This chain is Oligogalacturonate lyase (ogl), found in Dickeya dadantii (strain 3937) (Erwinia chrysanthemi (strain 3937)).